The following is a 223-amino-acid chain: Deoxyribose-phosphate aldolase (223 aa).

Residue Asp89 is the Proton donor/acceptor of the active site. The Schiff-base intermediate with acetaldehyde role is filled by Lys152. Residue Lys181 is the Proton donor/acceptor of the active site.

It belongs to the DeoC/FbaB aldolase family. DeoC type 1 subfamily.

It localises to the cytoplasm. It catalyses the reaction 2-deoxy-D-ribose 5-phosphate = D-glyceraldehyde 3-phosphate + acetaldehyde. It functions in the pathway carbohydrate degradation; 2-deoxy-D-ribose 1-phosphate degradation; D-glyceraldehyde 3-phosphate and acetaldehyde from 2-deoxy-alpha-D-ribose 1-phosphate: step 2/2. Catalyzes a reversible aldol reaction between acetaldehyde and D-glyceraldehyde 3-phosphate to generate 2-deoxy-D-ribose 5-phosphate. This chain is Deoxyribose-phosphate aldolase, found in Listeria monocytogenes serotype 4b (strain F2365).